The primary structure comprises 304 residues: N-carbamoyl-D-amino acid hydrolase (304 aa).

A CN hydrolase domain is found at 5–276 (MILAVGQQGP…DEVITAAVCL (272 aa)). Active-site residues include Glu-47, Lys-127, and Cys-172.

As to quaternary structure, homotetramer.

The catalysed reaction is an N-carbamoyl-D-amino acid + H2O + 2 H(+) = a D-alpha-amino acid + NH4(+) + CO2. With respect to regulation, the activity decreases with increasing concentration of H(2)O(2). Has 68% and 43% of activity remaining upon treatment with 0.1 and 0.2 mM H(2)O(2) for 30 minutes, respectively. Inhibited significantly by 2 mM Zn(2+), Cu(2+) and Ag(+), moderately by Co(2+), Mn(2+), Sn(2+) and Mg(2+), and only slightly by Ba(2+). Slightly activated by Fe(2+) and Ca(2+). No effect on activity by metal chelators EDTA and 8-hydroxyquinoline at 2 mM or by dithiothreitol, 2-mercaptoethanol or phenylmethanesulfonyl fluoride. In terms of biological role, catalyzes the hydrolysis of N-carbamoyl-D-amino acids to the corresponding D-amino acids. Hydrolyzes aromatic and aliphatic N-carbamoyl-D-amino acids in vitro. Effectively hydrolyzes N-carbamoyl-D-p-hydroxyphenylglycine and N-carbamoyl-DL-p-hydroxyphenylglycine, and to a lesser extent N-carbamoyl-D-methionine. No activity for N-carbamoyl-L-amino acids, N-carbamoyl-beta-alanine or (RS)-alpha-ethyl-N-carbamoylphenylglycine in vitro. This is N-carbamoyl-D-amino acid hydrolase from Ensifer adhaerens (Sinorhizobium morelense).